Consider the following 253-residue polypeptide: MTSIAKSIVLLASLATFAYSLYVVGSLMMFLSTPRSISKAHTWIFNLLDNKSRLQTAYGPVVFDTLYLIGFIFQHSFLKSAVVKKLLAKLGLSGAERTIYSLTSSLCLHYLIVNWLPAQSIVLWQIDVEQSAPLWWTFVITHGICWVVIFGGSLVMDLPELLGVKQAYYDLKAYGPPISYKSGELRNLYAHVRHPSFVGLSVILFATNVMSVDRLVMALLLTTYMYLAWSTDQKDVAYQKIQLQRKKLELKAK.

At 1–2 (MT) the chain is on the nuclear side. The helical transmembrane segment at 3–30 (SIAKSIVLLASLATFAYSLYVVGSLMMF) threads the bilayer. Residues 31-56 (LSTPRSISKAHTWIFNLLDNKSRLQT) are Perinuclear space-facing. Residues 57 to 78 (AYGPVVFDTLYLIGFIFQHSFL) form a helical membrane-spanning segment. Topologically, residues 79–96 (KSAVVKKLLAKLGLSGAE) are nuclear. The helical transmembrane segment at 97–113 (RTIYSLTSSLCLHYLIV) threads the bilayer. The Perinuclear space portion of the chain corresponds to 114–132 (NWLPAQSIVLWQIDVEQSA). The helical transmembrane segment at 133–161 (PLWWTFVITHGICWVVIFGGSLVMDLPEL) threads the bilayer. The Nuclear portion of the chain corresponds to 162–188 (LGVKQAYYDLKAYGPPISYKSGELRNL). Residues 189 to 207 (YAHVRHPSFVGLSVILFAT) traverse the membrane as a helical segment. Residues 208-213 (NVMSVD) lie on the Perinuclear space side of the membrane. A helical transmembrane segment spans residues 214-231 (RLVMALLLTTYMYLAWST). Topologically, residues 232-253 (DQKDVAYQKIQLQRKKLELKAK) are nuclear.

This sequence belongs to the nurim family.

Its subcellular location is the nucleus inner membrane. The polypeptide is Nurim homolog (nrm) (Drosophila melanogaster (Fruit fly)).